Consider the following 485-residue polypeptide: Glutamate--tRNA ligase (485 aa).

The 'HIGH' region motif lies at 11-21; the sequence is PSPTGLLHIGN. A 'KMSKS' region motif is present at residues 255-259; the sequence is KLSKR. Lys-258 lines the ATP pocket.

It belongs to the class-I aminoacyl-tRNA synthetase family. Glutamate--tRNA ligase type 1 subfamily. As to quaternary structure, monomer.

It localises to the cytoplasm. The enzyme catalyses tRNA(Glu) + L-glutamate + ATP = L-glutamyl-tRNA(Glu) + AMP + diphosphate. Catalyzes the attachment of glutamate to tRNA(Glu) in a two-step reaction: glutamate is first activated by ATP to form Glu-AMP and then transferred to the acceptor end of tRNA(Glu). The sequence is that of Glutamate--tRNA ligase from Streptococcus gordonii (strain Challis / ATCC 35105 / BCRC 15272 / CH1 / DL1 / V288).